The chain runs to 581 residues: Rhodanese-like domain-containing protein 6 (581 aa).

Residues 158-258 (ENKELVLLDA…YLEQFPSGGF (101 aa)) form the Rhodanese domain. The active-site Cysteine persulfide intermediate is the C216.

The chain is Rhodanese-like domain-containing protein 6 (STR6) from Arabidopsis thaliana (Mouse-ear cress).